The following is a 485-amino-acid chain: MAKLVLSLCFLLFSGCFALREQAQQNECQIQKLNALKPDNRIESEGGFIETWNPNNKPFQCAGVALSRCTLNRNALRRPSYTNGPQEIYIQQGNGIFGMIFPGCPSTYQEPQESQQRGRSQRPQDRHQKVHRFREGDLIAVPTGVAWWMYNNEDTPVVAVSIIDTNSLENQLDQMPRRFYLAGNQEQEFLKYQQQQQGGSQSQKGKQQEEENEGSNILSGFAPEFLKEAFGVNMQIVRNLQGENEEEDSGAIVTVKGGLRVTAPAMRKPQQEEDDDDEEEQPQCVETDKGCQRQSKRSRNGIDETICTMRLRQNIGQNSSPDIYNPQAGSITTATSLDFPALWLLKLSAQYGSLRKNAMFVPHYTLNANSIIYALNGRALVQVVNCNGERVFDGELQEGGVLIVPQNFAVAAKSQSDNFEYVSFKTNDRPSIGNLAGANSLLNALPEEVIQHTFNLKSQQARQVKNNNPFSFLVPPQESQRRAVA.

The N-terminal stretch at 1–18 (MAKLVLSLCFLLFSGCFA) is a signal peptide. Intrachain disulfides connect Cys28-Cys61 and Cys104-Cys307. One can recognise a Cupin type-1 1 domain in the interval 33–238 (LNALKPDNRI…AFGVNMQIVR (206 aa)). Residues 108-118 (YQEPQESQQRG) show a composition bias toward polar residues. Disordered stretches follow at residues 108–130 (YQEP…HQKV), 192–215 (YQQQ…NEGS), and 262–298 (TAPA…SKRS). Residues 192–205 (YQQQQQGGSQSQKG) show a composition bias toward low complexity. Positions 272 to 281 (EEDDDDEEEQ) are enriched in acidic residues. Residues 297–300 (RSRN) constitute a propeptide that is removed on maturation. The region spanning 313 to 462 (QNIGQNSSPD…TFNLKSQQAR (150 aa)) is the Cupin type-1 2 domain. The short motif at 476-485 (PQESQRRAVA) is the Vacuolar targeting signal element. Positions 481 to 485 (RRAVA) are excised as a propeptide.

This sequence belongs to the 11S seed storage protein (globulins) family. Hexamer; each subunit is composed of an acidic and a basic chain derived from a single precursor and linked by a disulfide bond. During soybean germination, seed storage proteins are hydrolyzed by protease/26S proteasome. As to expression, exclusively in seeds during embryogenesis.

The protein resides in the endoplasmic reticulum. It is found in the protein storage vacuole. In terms of biological role, glycinin is the major seed storage protein of soybean. Glycinin basic peptides (GBPs), and, to a lower extent, glycinin exhibit antibacterial activity against Gram-negative and Gram-positive bacteria (e.g. L.monocytogenes, B.subtilis, E.coli and S.enteritidis) by forming pores and aggregating in transmembranes, leading to membrane permeability and, eventually, cell death. The sequence is that of Glycinin G2 from Glycine max (Soybean).